A 580-amino-acid polypeptide reads, in one-letter code: Microcin-J25 export ATP-binding/permease protein McjD (580 aa).

6 consecutive transmembrane segments (helical) span residues 25–45, 66–86, 143–163, 167–187, 261–281, and 286–306; these read FFSM…SPLI, VLLA…VFLF, VSQN…VVLS, WFSA…NTRL, AVIL…NGVV, and FIMI…IGAL. An ABC transmembrane type-1 domain is found at 25 to 312; sequence FFSMLFITSL…IGALLSEIRQ (288 aa). The ABC transporter domain occupies 345–578; the sequence is LSIRELSFSY…NEYISGLASV (234 aa). ATP is bound at residue 378 to 385; that stretch reads GPSGSGKS.

The protein belongs to the ABC transporter superfamily. In terms of assembly, homodimer.

The protein resides in the cell inner membrane. Functionally, is able to protect a cell, which harbors the plasmid pTUC100 encoding microcin J25, against microcin J25. Is required for microcin J25 export out of the producing cells. The polypeptide is Microcin-J25 export ATP-binding/permease protein McjD (mcjD) (Escherichia coli).